A 169-amino-acid chain; its full sequence is 2-C-methyl-D-erythritol 2,4-cyclodiphosphate synthase (169 aa).

Residues D13 and H15 each contribute to the a divalent metal cation site. Residues 13–15 and 39–40 contribute to the 4-CDP-2-C-methyl-D-erythritol 2-phosphate site; these read DVH and HS. Residue H47 participates in a divalent metal cation binding. 4-CDP-2-C-methyl-D-erythritol 2-phosphate-binding positions include 61–63, 66–70, F144, and R147; these read DIG and FPDTD.

It belongs to the IspF family. In terms of assembly, homotrimer. It depends on a divalent metal cation as a cofactor.

The catalysed reaction is 4-CDP-2-C-methyl-D-erythritol 2-phosphate = 2-C-methyl-D-erythritol 2,4-cyclic diphosphate + CMP. The protein operates within isoprenoid biosynthesis; isopentenyl diphosphate biosynthesis via DXP pathway; isopentenyl diphosphate from 1-deoxy-D-xylulose 5-phosphate: step 4/6. In terms of biological role, involved in the biosynthesis of isopentenyl diphosphate (IPP) and dimethylallyl diphosphate (DMAPP), two major building blocks of isoprenoid compounds. Catalyzes the conversion of 4-diphosphocytidyl-2-C-methyl-D-erythritol 2-phosphate (CDP-ME2P) to 2-C-methyl-D-erythritol 2,4-cyclodiphosphate (ME-CPP) with a corresponding release of cytidine 5-monophosphate (CMP). This Cupriavidus pinatubonensis (strain JMP 134 / LMG 1197) (Cupriavidus necator (strain JMP 134)) protein is 2-C-methyl-D-erythritol 2,4-cyclodiphosphate synthase.